The sequence spans 466 residues: Soluble pyridine nucleotide transhydrogenase (466 aa).

36-45 (ERYQNVGGGC) is a binding site for FAD.

The protein belongs to the class-I pyridine nucleotide-disulfide oxidoreductase family. In terms of assembly, homooligomer; probable homooctamer. It depends on FAD as a cofactor.

It localises to the cytoplasm. It carries out the reaction NAD(+) + NADPH = NADH + NADP(+). Its function is as follows. Conversion of NADPH, generated by peripheral catabolic pathways, to NADH, which can enter the respiratory chain for energy generation. This is Soluble pyridine nucleotide transhydrogenase from Escherichia coli O6:H1 (strain CFT073 / ATCC 700928 / UPEC).